A 564-amino-acid polypeptide reads, in one-letter code: Putative zinc metalloproteinase in scaA 5'region (564 aa).

The Peptidase M13 domain maps to 1 to 564 (MTRLQDDFYD…KEADFSAEEF (564 aa)). Residue H478 coordinates Zn(2+). E479 is a catalytic residue. The Zn(2+) site is built by H482 and E538. D542 acts as the Proton donor in catalysis.

This sequence belongs to the peptidase M13 family. Requires Zn(2+) as cofactor.

This Streptococcus gordonii (strain Challis / ATCC 35105 / BCRC 15272 / CH1 / DL1 / V288) protein is Putative zinc metalloproteinase in scaA 5'region.